Consider the following 266-residue polypeptide: Glutamate racemase (266 aa).

Residues 10-11 and 42-43 contribute to the substrate site; these read DS and YG. Residue Cys73 is the Proton donor/acceptor of the active site. Residue 74–75 participates in substrate binding; the sequence is NT. Cys183 functions as the Proton donor/acceptor in the catalytic mechanism. Residue 184 to 185 participates in substrate binding; it reads TH.

It belongs to the aspartate/glutamate racemases family.

The enzyme catalyses L-glutamate = D-glutamate. Its pathway is cell wall biogenesis; peptidoglycan biosynthesis. Functionally, provides the (R)-glutamate required for cell wall biosynthesis. The protein is Glutamate racemase of Lactobacillus johnsonii (strain CNCM I-12250 / La1 / NCC 533).